The primary structure comprises 102 residues: Small ribosomal subunit protein bS18c (102 aa).

Belongs to the bacterial ribosomal protein bS18 family. Part of the 30S ribosomal subunit.

It is found in the plastid. The protein localises to the chloroplast. This chain is Small ribosomal subunit protein bS18c, found in Phaseolus vulgaris (Kidney bean).